The primary structure comprises 1255 residues: Receptor tyrosine-protein kinase erbB-2 (1255 aa).

The first 22 residues, 1–22 (MELAALCRWGLLLALLPPGAAS), serve as a signal peptide directing secretion. At 23 to 652 (TQVCTGTDMK…PAEQRASPLT (630 aa)) the chain is on the extracellular side. Cysteine 26 and cysteine 53 are joined by a disulfide. 2 N-linked (GlcNAc...) asparagine glycosylation sites follow: asparagine 68 and asparagine 124. 16 cysteine pairs are disulfide-bonded: cysteine 162–cysteine 192, cysteine 195–cysteine 204, cysteine 199–cysteine 212, cysteine 220–cysteine 227, cysteine 224–cysteine 235, cysteine 236–cysteine 244, cysteine 240–cysteine 252, cysteine 255–cysteine 264, cysteine 268–cysteine 295, cysteine 299–cysteine 311, cysteine 315–cysteine 331, cysteine 334–cysteine 338, cysteine 342–cysteine 367, cysteine 475–cysteine 504, cysteine 511–cysteine 520, and cysteine 515–cysteine 528. Residue threonine 182 is modified to Phosphothreonine. Asparagine 187 carries an N-linked (GlcNAc...) asparagine glycan. The N-linked (GlcNAc...) asparagine glycan is linked to asparagine 259. N-linked (GlcNAc...) asparagine glycosylation is present at asparagine 530. 8 cysteine pairs are disulfide-bonded: cysteine 531/cysteine 540, cysteine 544/cysteine 560, cysteine 563/cysteine 576, cysteine 567/cysteine 584, cysteine 587/cysteine 596, cysteine 600/cysteine 623, cysteine 626/cysteine 634, and cysteine 630/cysteine 642. An N-linked (GlcNAc...) asparagine glycan is attached at asparagine 571. N-linked (GlcNAc...) asparagine glycosylation is present at asparagine 629. Residues 653 to 675 (SIISAVVGILLVVVLGVVFGILI) form a helical membrane-spanning segment. The tract at residues 676 to 689 (KRRQQKIRKYTMRR) is required for interaction with KPNB1 and EEA1. The Nuclear localization signal signature appears at 676–689 (KRRQQKIRKYTMRR). Over 676 to 1255 (KRRQQKIRKY…PEYLGLDVPV (580 aa)) the chain is Cytoplasmic. The Protein kinase domain occupies 720–987 (LRKVKVLGSG…RMARDPQRFV (268 aa)). ATP contacts are provided by residues 726 to 734 (LGSGAFGTV) and lysine 753. The Proton acceptor role is filled by aspartate 845. Tyrosine 877 carries the phosphotyrosine modification. Disordered stretches follow at residues 1035–1179 (PAPG…GKNG) and 1196–1255 (YLTP…DVPV). A phosphoserine mark is found at serine 1054, serine 1078, serine 1083, and serine 1107. Phosphotyrosine is present on residues tyrosine 1112 and tyrosine 1139. A compositionally biased stretch (pro residues) spans 1146–1155 (RPQPPSPREG). Position 1151 is a phosphoserine (serine 1151). Threonine 1166 carries the phosphothreonine modification. Residues 1195–1197 (EYL) form an interaction with PIK3C2B region. Position 1196 is a phosphotyrosine (tyrosine 1196). Tyrosine 1248 is subject to Phosphotyrosine; by autocatalysis.

The protein belongs to the protein kinase superfamily. Tyr protein kinase family. EGF receptor subfamily. As to quaternary structure, homodimer. Heterodimer with EGFR, ERBB3 and ERBB4. Part of a complex with EGFR and either PIK3C2A or PIK3C2B. May interact with PIK3C2B when phosphorylated on Tyr-1196. Interacts with PLXNB1. Interacts (when phosphorylated on Tyr-1248) with MEMO1. Interacts with MUC1; the interaction is enhanced by heregulin (HRG). Interacts (when phosphorylated on Tyr-1139) with GRB7 (via SH2 domain). Interacts (when phosphorylated on Tyr-1248) with ERBIN. Interacts with KPNB1, RANBP2, EEA1, CRM1 and CLTC. Interacts with PTK6. Interacts with RPA194 and ACTB. Interacts with PRKCABP, SRC and MYOC. Interacts (preferentially with the tyrosine phosphorylated form) with CPNE3; this interaction occurs at the cell membrane and is increased in a growth factor heregulin-dependent manner. Interacts with HSP90AA1 and HSP90AB1 in an ATP-dependent manner; the interaction suppresses ERBB2 kinase activity. Interacts with SORL1; this interaction regulates ERBB2 subcellular distribution by promoting its recycling after internalization from endosomes back to the plasma membrane, hence stimulates ERBB2-mediated signaling. Interacts with SH3BGRL. Interacts with ROR1. In terms of processing, autophosphorylated. Autophosphorylation occurs in trans, i.e. one subunit of the dimeric receptor phosphorylates tyrosine residues on the other subunit. Ligand-binding increases phosphorylation on tyrosine residues. Signaling via SEMA4C promotes phosphorylation at Tyr-1248. Dephosphorylated by PTPN12. Expressed in a variety of tumor tissues including primary breast tumors and tumors from small bowel, esophagus, kidney and mouth.

Its subcellular location is the cell membrane. It is found in the cell projection. The protein resides in the ruffle membrane. It localises to the early endosome. The protein localises to the cytoplasm. Its subcellular location is the perinuclear region. It is found in the nucleus. The enzyme catalyses L-tyrosyl-[protein] + ATP = O-phospho-L-tyrosyl-[protein] + ADP + H(+). Activated by dimerization. Not activated by EGF, TGF-alpha and amphiregulin. Interaction with PTK6 increases its intrinsic kinase activity. In terms of biological role, protein tyrosine kinase that is part of several cell surface receptor complexes, but that apparently needs a coreceptor for ligand binding. Essential component of a neuregulin-receptor complex, although neuregulins do not interact with it alone. GP30 is a potential ligand for this receptor. Regulates outgrowth and stabilization of peripheral microtubules (MTs). Upon ERBB2 activation, the MEMO1-RHOA-DIAPH1 signaling pathway elicits the phosphorylation and thus the inhibition of GSK3B at cell membrane. This prevents the phosphorylation of APC and CLASP2, allowing its association with the cell membrane. In turn, membrane-bound APC allows the localization of MACF1 to the cell membrane, which is required for microtubule capture and stabilization. Its function is as follows. In the nucleus is involved in transcriptional regulation. Associates with the 5'-TCAAATTC-3' sequence in the PTGS2/COX-2 promoter and activates its transcription. Implicated in transcriptional activation of CDKN1A; the function involves STAT3 and SRC. Involved in the transcription of rRNA genes by RNA Pol I and enhances protein synthesis and cell growth. The protein is Receptor tyrosine-protein kinase erbB-2 (ERBB2) of Homo sapiens (Human).